Reading from the N-terminus, the 630-residue chain is Prolactin receptor (630 aa).

The N-terminal stretch at 1-23 (MMTKVGEVLLLLLLPAFVPHTDG) is a signal peptide. At 24-234 (THYSLPGKPT…VKVPEYLHRE (211 aa)) the chain is on the extracellular side. Fibronectin type-III domains lie at 31-128 (KPTE…IVQP) and 130-230 (PPEK…VPEY). 2 disulfide bridges follow: cysteine 37-cysteine 47 and cysteine 76-cysteine 87. N-linked (GlcNAc...) asparagine glycosylation is found at asparagine 92 and asparagine 101. Aspartate 212 and histidine 213 together coordinate Zn(2+). The WSXWS motif motif lies at 216 to 220 (WSEWS). A helical membrane pass occupies residues 235–258 (KSVWILVLVFSAFILLLLTWLIHM). Over 259 to 630 (NSHSLKHCML…DTATVFSVHT (372 aa)) the chain is Cytoplasmic. The Box 1 motif signature appears at 267 to 275 (MLPPVPGPK). The disordered stretch occupies residues 339–389 (KSIGSASDSDSGRGSCDSDNLLMDKSGAPKEEQQQQNQEGDQIGKETQGPK). The span at 340-357 (SIGSASDSDSGRGSCDSD) shows a compositional bias: low complexity. A compositionally biased stretch (basic and acidic residues) spans 380–389 (QIGKETQGPK).

Belongs to the type I cytokine receptor family. Type 1 subfamily.

The protein localises to the membrane. This is a receptor for the anterior pituitary hormone prolactin. In Oreochromis niloticus (Nile tilapia), this protein is Prolactin receptor (prlr).